The sequence spans 157 residues: Protein Smg homolog (157 aa).

This sequence belongs to the Smg family.

The chain is Protein Smg homolog from Shewanella pealeana (strain ATCC 700345 / ANG-SQ1).